The sequence spans 433 residues: Phosphomethylpyrimidine synthase (433 aa).

Substrate contacts are provided by residues N66, M94, Y123, H162, 184-186 (SRG), 225-228 (DALR), and E264. A Zn(2+)-binding site is contributed by H268. Y291 is a binding site for substrate. H332 lines the Zn(2+) pocket. [4Fe-4S] cluster-binding residues include C408, C411, and C415.

Belongs to the ThiC family. The cofactor is [4Fe-4S] cluster.

The catalysed reaction is 5-amino-1-(5-phospho-beta-D-ribosyl)imidazole + S-adenosyl-L-methionine = 4-amino-2-methyl-5-(phosphooxymethyl)pyrimidine + CO + 5'-deoxyadenosine + formate + L-methionine + 3 H(+). It functions in the pathway cofactor biosynthesis; thiamine diphosphate biosynthesis. Its function is as follows. Catalyzes the synthesis of the hydroxymethylpyrimidine phosphate (HMP-P) moiety of thiamine from aminoimidazole ribotide (AIR) in a radical S-adenosyl-L-methionine (SAM)-dependent reaction. This chain is Phosphomethylpyrimidine synthase, found in Saccharolobus islandicus (strain M.14.25 / Kamchatka #1) (Sulfolobus islandicus).